We begin with the raw amino-acid sequence, 236 residues long: Syntaxin-8 (236 aa).

The Cytoplasmic segment spans residues 1 to 215 (MAPDPWFSTY…LVDRKSTSCG (215 aa)). Residues 42–65 (VTIRALLQKLKEKIALLKDLLLRA) are a coiled coil. The t-SNARE coiled-coil homology domain occupies 145 to 207 (QKIIQEQDAG…RTETRRVNLV (63 aa)). The residue at position 160 (S160) is a Phosphoserine. Residues 216 to 232 (MIMVILLLLVAIVVVAV) form a helical; Anchor for type IV membrane protein membrane-spanning segment. Topologically, residues 233–236 (WPTK) are vesicular.

This sequence belongs to the syntaxin family. In terms of assembly, forms a SNARE complex with STX7, VTI1B and VAMP8 which functions in the homotypic fusion of late endosomes. Part of the SNARE core complex containing STX7, VAMP8 and VTI1B. Interacts with VAMP8. Interacts with HECTD3. Interacts with TPC1. Ubiquitinated by HECTD3.

The protein resides in the membrane. Vesicle trafficking protein that functions in the early secretory pathway, possibly by mediating retrograde transport from cis-Golgi membranes to the ER. The protein is Syntaxin-8 (STX8) of Bos taurus (Bovine).